A 471-amino-acid polypeptide reads, in one-letter code: Glutamate--tRNA ligase (471 aa).

The 'HIGH' region motif lies at 10-20 (PSPTGFLHIGG). A disordered region spans residues 117 to 137 (GRPPRYDGRWRDRPASERPTD). Residues 239–243 (KLSKR) carry the 'KMSKS' region motif. Lysine 242 is a binding site for ATP.

This sequence belongs to the class-I aminoacyl-tRNA synthetase family. Glutamate--tRNA ligase type 1 subfamily. In terms of assembly, monomer.

It is found in the cytoplasm. The enzyme catalyses tRNA(Glu) + L-glutamate + ATP = L-glutamyl-tRNA(Glu) + AMP + diphosphate. Functionally, catalyzes the attachment of glutamate to tRNA(Glu) in a two-step reaction: glutamate is first activated by ATP to form Glu-AMP and then transferred to the acceptor end of tRNA(Glu). This chain is Glutamate--tRNA ligase, found in Azorhizobium caulinodans (strain ATCC 43989 / DSM 5975 / JCM 20966 / LMG 6465 / NBRC 14845 / NCIMB 13405 / ORS 571).